A 295-amino-acid chain; its full sequence is Succinate dehydrogenase [ubiquinone] iron-sulfur subunit, mitochondrial (295 aa).

The 2Fe-2S ferredoxin-type domain occupies Glu-67–Met-144. [2Fe-2S] cluster contacts are provided by Cys-106, Cys-111, Cys-114, and Cys-126. In terms of domain architecture, 4Fe-4S ferredoxin-type spans Glu-185–Tyr-215. Residues Cys-195, Cys-198, and Cys-201 each contribute to the [4Fe-4S] cluster site. A [3Fe-4S] cluster-binding site is contributed by Cys-205. Trp-210 provides a ligand contact to a ubiquinone. 2 residues coordinate [3Fe-4S] cluster: Cys-252 and Cys-258. Cys-262 contacts [4Fe-4S] cluster.

This sequence belongs to the succinate dehydrogenase/fumarate reductase iron-sulfur protein family. Component of complex II composed of four subunits: a flavoprotein (FP), an iron-sulfur protein (IP), and a cytochrome b composed of a large and a small subunit. [2Fe-2S] cluster is required as a cofactor. Requires [3Fe-4S] cluster as cofactor. The cofactor is [4Fe-4S] cluster.

It is found in the mitochondrion inner membrane. The enzyme catalyses a quinone + succinate = fumarate + a quinol. The protein operates within carbohydrate metabolism; tricarboxylic acid cycle; fumarate from succinate (eukaryal route): step 1/1. Functionally, iron-sulfur protein (IP) subunit of succinate dehydrogenase (SDH) that is involved in complex II of the mitochondrial electron transport chain and is responsible for transferring electrons from succinate to ubiquinone (coenzyme Q). This is Succinate dehydrogenase [ubiquinone] iron-sulfur subunit, mitochondrial (SDH2) from Mycosarcoma maydis (Corn smut fungus).